Here is a 1325-residue protein sequence, read N- to C-terminus: RIMS-binding protein 2 (1325 aa).

The disordered stretch occupies residues 153-181 (TFLSKSRSDTPRCRFDSDMDNDQNSNTSK). A compositionally biased stretch (basic and acidic residues) spans 158 to 169 (SRSDTPRCRFDS). The SH3 1 domain maps to 186 to 253 (GKVHLCIARY…PSNFVDFVQD (68 aa)). Fibronectin type-III domains lie at 315–408 (VPYP…GKDV), 411–493 (APSN…KKEA), and 507–608 (PPQD…VPPS). 3 disordered regions span residues 601-778 (SDLL…GSDL), 988-1010 (DLGSSFVEPRSEQVKSSYEKKYE), and 1040-1090 (AAGP…SRPM). The segment covering 627–641 (ETKEEHLGPHLKIDE) has biased composition (basic and acidic residues). The span at 664–676 (FPSSLQGRRSPSP) shows a compositional bias: polar residues. The span at 696-716 (MAREAAQRVAESNRMERRSVF) shows a compositional bias: basic and acidic residues. Residues 717-727 (SERSNAAQYAN) show a composition bias toward polar residues. 2 stretches are compositionally biased toward basic and acidic residues: residues 763 to 774 (CHGEDYHTESSR) and 996 to 1010 (PRSEQVKSSYEKKYE). 2 SH3 domains span residues 1121–1189 (ISTR…EIQA) and 1225–1292 (VSTR…EVPD).

It belongs to the RIMBP family. In terms of assembly, interacts with RIMS1, RIMS2, CACNA1D and CACNA1B, and potentially with other Ca(2+) channel alpha-1 isoforms. In terms of tissue distribution, brain, cochlea and retina.

It is found in the cell membrane. Its subcellular location is the synapse. Plays a role in the synaptic transmission as bifunctional linker that interacts simultaneously with RIMS1, RIMS2, CACNA1D and CACNA1B. This is RIMS-binding protein 2 (RIMBP2) from Gallus gallus (Chicken).